A 283-amino-acid polypeptide reads, in one-letter code: NifU-like protein 4, mitochondrial (283 aa).

A mitochondrion-targeting transit peptide spans 1–48; the sequence is MKGIARLVTSLSRIGGRKVVSGTSTVTSSSSSSLLLSRRSLFISATNL.

This sequence belongs to the NifU family. As to expression, predominantly expressed in roots.

It is found in the mitochondrion. Functionally, molecular scaffold for [Fe-S] cluster assembly of mitochondrial iron-sulfur proteins. The chain is NifU-like protein 4, mitochondrial (NIFU4) from Arabidopsis thaliana (Mouse-ear cress).